Here is a 699-residue protein sequence, read N- to C-terminus: Polyribonucleotide nucleotidyltransferase (699 aa).

Mg(2+) is bound by residues aspartate 485 and aspartate 491. Residues 552 to 611 (PRITTIKINPEKIRDVIGKGGAVIRALTEETGTTIELEDDGTVRIASSNGEATKEAIRRI) enclose the KH domain. In terms of domain architecture, S1 motif spans 621 to 689 (GRIYNGKVIR…RQGRVRLSIK (69 aa)).

This sequence belongs to the polyribonucleotide nucleotidyltransferase family. Component of the RNA degradosome, which is a multiprotein complex involved in RNA processing and mRNA degradation. Mg(2+) serves as cofactor.

The protein resides in the cytoplasm. The catalysed reaction is RNA(n+1) + phosphate = RNA(n) + a ribonucleoside 5'-diphosphate. Functionally, involved in mRNA degradation. Catalyzes the phosphorolysis of single-stranded polyribonucleotides processively in the 3'- to 5'-direction. This chain is Polyribonucleotide nucleotidyltransferase, found in Shewanella sp. (strain W3-18-1).